Reading from the N-terminus, the 198-residue chain is Glycerol-3-phosphate acyltransferase (198 aa).

5 helical membrane passes run 6-26 (MLPV…GLIL), 56-78 (LAAA…AGYL), 83-101 (AAML…PVWL), 113-133 (IGIL…VWLA), and 154-174 (IVLW…LTLL).

The protein belongs to the PlsY family. As to quaternary structure, probably interacts with PlsX.

The protein resides in the cell inner membrane. The catalysed reaction is an acyl phosphate + sn-glycerol 3-phosphate = a 1-acyl-sn-glycero-3-phosphate + phosphate. Its pathway is lipid metabolism; phospholipid metabolism. Functionally, catalyzes the transfer of an acyl group from acyl-phosphate (acyl-PO(4)) to glycerol-3-phosphate (G3P) to form lysophosphatidic acid (LPA). This enzyme utilizes acyl-phosphate as fatty acyl donor, but not acyl-CoA or acyl-ACP. The chain is Glycerol-3-phosphate acyltransferase from Bradyrhizobium sp. (strain ORS 278).